Here is a 181-residue protein sequence, read N- to C-terminus: Peptidyl-prolyl cis-trans isomerase H (181 aa).

Residues 17–180 form the PPIase cyclophilin-type domain; it reads FFDITLGGES…QDVTIIQCGE (164 aa).

The protein belongs to the cyclophilin-type PPIase family. PPIase H subfamily.

Its subcellular location is the nucleus. The enzyme catalyses [protein]-peptidylproline (omega=180) = [protein]-peptidylproline (omega=0). Functionally, PPIases accelerate the folding of proteins. It catalyzes the cis-trans isomerization of proline imidic peptide bonds in oligopeptides. The protein is Peptidyl-prolyl cis-trans isomerase H (cyp3) of Aspergillus oryzae (strain ATCC 42149 / RIB 40) (Yellow koji mold).